Consider the following 154-residue polypeptide: Deoxyuridine 5'-triphosphate nucleotidohydrolase (154 aa).

Substrate contacts are provided by residues 68–70 (RSG), Asn-81, and 85–87 (TID).

This sequence belongs to the dUTPase family. It depends on Mg(2+) as a cofactor.

It catalyses the reaction dUTP + H2O = dUMP + diphosphate + H(+). Its pathway is pyrimidine metabolism; dUMP biosynthesis; dUMP from dCTP (dUTP route): step 2/2. Its function is as follows. This enzyme is involved in nucleotide metabolism: it produces dUMP, the immediate precursor of thymidine nucleotides and it decreases the intracellular concentration of dUTP so that uracil cannot be incorporated into DNA. The sequence is that of Deoxyuridine 5'-triphosphate nucleotidohydrolase from Acidiphilium cryptum (strain JF-5).